Here is a 652-residue protein sequence, read N- to C-terminus: MSAFPASPQPSAFPASPQPSAFPASPQPSASPVSPRHCVSPSSGTLPSSSSPSVSSCALRGLSSSSSALSRPPFSSFPASPAFSRRCMLTESEMGKTRSLKWLRFRCILGACLLHFCLGGSHTIGNLLPYLIGFIRNAQATSAVSYKDGLSIYAWAIICQGVGGFLGTTLEKKAGTKKTAFLGSAWMTLGLALCGVCTHDLSLFLIAYGVVTALGCGVAYPVPLAATLKLSPAEDKGWVSGLLFFARGLSVCILCPFQSFFLHQPPEVFLSLIPAPLLPYLSSVASDTASASRLSSLNGKRAAPLPSPGGERFLTDQAVLDRLPALFFVMAGVFACIQLLGVLLLVDPERTSAADEAAADAAERQKLLYEDPQGASRASAGRSSSCSASQVFASLVLTPQDICSSPSFWRLFLMLLLSWQSLFFVQLFWKVLPLYPEASLAASAAAPAPLDSLFASVVRRVPRALASASRPDPRALHAAADAWSLTGSSWSFANDFFLSCLGGLLGALCCFGRLLWGYIGGGIGYMRSTVVMNALTAPCLFALSTYALQSPQLYAACLALVHVCHGGIFSLFPSVTSDLFGHKNVGPVFSLLFAARLAAVALAAIWINIALTYGNLHMVVGALGVCHLVSIGTTFFFHPTDALPYRFPTYSP.

Residues 1 to 45 (MSAFPASPQPSAFPASPQPSAFPASPQPSASPVSPRHCVSPSSGT) lie on the Cytoplasmic side of the membrane. The disordered stretch occupies residues 1-53 (MSAFPASPQPSAFPASPQPSAFPASPQPSASPVSPRHCVSPSSGTLPSSSSPS). 12 consecutive transmembrane segments (helical) span residues 46–66 (LPSS…SSSS), 126–146 (NLLP…AVSY), 167–187 (GTTL…SAWM), 189–209 (LGLA…IAYG), 212–232 (TALG…KLSP), 278–298 (LPYL…SSLN), 345–365 (LVDP…AERQ), 385–405 (SCSA…ICSS), 417–437 (LSWQ…LYPE), 445–465 (AAPA…PRAL), 467–487 (SASR…SLTG), and 515–535 (LWGY…MNAL). Residues 536–652 (TAPCLFALST…LPYRFPTYSP (117 aa)) lie on the Cytoplasmic side of the membrane.

Belongs to the major facilitator superfamily. As to quaternary structure, interacts with apicoplast pyruvate carrier 1.

The protein resides in the plastid. The protein localises to the apicoplast. It is found in the membrane. Along with apicoplast pyruvate carrier 1, forms apicoplast pyruvate carrier (APC) complex, which transports pyruvate into the apicoplast and may also transport amino acids like methionine, serine, glycine and tryptophan with low efficiency. Required for maintaining pyruvate-dependent metabolic activities in the apicoplast, such as synthesis of fatty acids, isopentenyl pyrophosphate (IPP), dimethylallyl pyrophosphate (DMAPP) and methylerythritol 4-phosphate (MEP). Required for maintaining the integrity of the apicoplast. Required for normal parasite growth. This chain is Apicoplast pyruvate carrier 2, found in Toxoplasma gondii.